Here is a 230-residue protein sequence, read N- to C-terminus: MASFTLSSATPSQLCSSKNGMFAPSLALAKAGRVNVLISKERIRGMKLTCQATSIPADNVPDMQKRETLNLLLLGALSLPTGYMLLPYASFFVPPGGGAGTGGTIAKDALGNDVIAAEWLKTHAPGDRTLTQGLKGDPTYLVVESDKTLATFGINAVCTHLGCVVPFNAAENKFICPCHGSQYNNQGRVVRGPAPLSLALAHCDVDDGKVVFVPWTETDFRTGEAPWWSA.

The N-terminal 51 residues, 1–51 (MASFTLSSATPSQLCSSKNGMFAPSLALAKAGRVNVLISKERIRGMKLTCQ), are a transit peptide targeting the chloroplast. The helical transmembrane segment at 73–93 (LLGALSLPTGYMLLPYASFFV) threads the bilayer. The Rieske domain maps to 116-212 (AAEWLKTHAP…CDVDDGKVVF (97 aa)). 4 residues coordinate [2Fe-2S] cluster: Cys-158, His-160, Cys-176, and His-179. Cys-163 and Cys-178 form a disulfide bridge.

Belongs to the Rieske iron-sulfur protein family. In terms of assembly, the 4 large subunits of the cytochrome b6-f complex are cytochrome b6, subunit IV (17 kDa polypeptide, petD), cytochrome f and the Rieske protein, while the 4 small subunits are petG, petL, petM and petN. The complex functions as a dimer. [2Fe-2S] cluster is required as a cofactor.

The protein resides in the plastid. Its subcellular location is the chloroplast thylakoid membrane. It carries out the reaction 2 oxidized [plastocyanin] + a plastoquinol + 2 H(+)(in) = 2 reduced [plastocyanin] + a plastoquinone + 4 H(+)(out). Its function is as follows. Component of the cytochrome b6-f complex, which mediates electron transfer between photosystem II (PSII) and photosystem I (PSI), cyclic electron flow around PSI, and state transitions. This chain is Cytochrome b6-f complex iron-sulfur subunit, chloroplastic (petC), found in Spinacia oleracea (Spinach).